Consider the following 85-residue polypeptide: UPF0291 protein SP_1473 (85 aa).

A disordered region spans residues 62-85 (TPEKLRQVQREKGLHGRSLDDPNS).

Belongs to the UPF0291 family.

The protein resides in the cytoplasm. The protein is UPF0291 protein SP_1473 of Streptococcus pneumoniae serotype 4 (strain ATCC BAA-334 / TIGR4).